An 83-amino-acid polypeptide reads, in one-letter code: Sulfur carrier protein TusA (83 aa).

The Cysteine persulfide intermediate role is filled by Cys-20.

It belongs to the sulfur carrier protein TusA family.

The protein localises to the cytoplasm. Its function is as follows. Sulfur carrier protein which probably makes part of a sulfur-relay system. This Pseudoalteromonas atlantica (strain T6c / ATCC BAA-1087) protein is Sulfur carrier protein TusA.